A 149-amino-acid chain; its full sequence is Calmodulin (149 aa).

A2 is modified (N-acetylalanine). EF-hand domains follow at residues 8–43, 44–79, 81–116, and 117–149; these read EQIA…LGQN, PTEA…KMKD, DSEE…LGEK, and LTDE…MTSK. Positions 21, 23, 25, 27, 32, 57, 59, 61, 63, 68, 94, 96, 98, and 105 each coordinate Ca(2+). K116 bears the N6,N6,N6-trimethyllysine mark. Residues D130, D132, D134, Q136, and E141 each contribute to the Ca(2+) site.

This sequence belongs to the calmodulin family.

Calmodulin mediates the control of a large number of enzymes, ion channels and other proteins by Ca(2+). Among the enzymes to be stimulated by the calmodulin-Ca(2+) complex are a number of protein kinases and phosphatases. The sequence is that of Calmodulin from Renilla reniformis (Sea pansy).